A 187-amino-acid polypeptide reads, in one-letter code: Flavin-dependent monooxygenase, reductase subunit HsaB (187 aa).

Residues 32 to 36 (PVGFA), 38 to 39 (QS), 53 to 55 (CPT), 59 to 60 (RS), and 85 to 86 (RF) each bind FAD. 152–155 (FYRG) contacts NAD(+).

The protein belongs to the non-flavoprotein flavin reductase family. HsaAB monooxygenase consists of an oxygenase component HsaA and a reductase component HsaB.

It carries out the reaction a reduced flavin + NAD(+) = an oxidized flavin + NADH + 2 H(+). Its pathway is lipid metabolism; steroid biosynthesis. In terms of biological role, catalyzes the reduction of free flavins (FMN or FAD) by NADH. Subsequently, the reduced flavins diffuse to the HsaA oxygenase subunit. The sequence is that of Flavin-dependent monooxygenase, reductase subunit HsaB (hsaB) from Mycobacterium tuberculosis (strain CDC 1551 / Oshkosh).